We begin with the raw amino-acid sequence, 601 residues long: Casbene synthase, chloroplastic (601 aa).

A chloroplast-targeting transit peptide spans 1–56; that stretch reads MALPSAAMQSNPEKLNLFHRLSSLPTTSLEYGNNRFPFFSSSAKSHFKKPTQACLS. Residues Asp355, Asp359, Asn499, Ser503, and Glu507 each coordinate Mg(2+). Positions 355 to 359 match the DDXXD motif motif; it reads DDTID.

The protein belongs to the terpene synthase family. The cofactor is Mg(2+).

Its subcellular location is the plastid. The protein localises to the chloroplast. The catalysed reaction is (2E,6E,10E)-geranylgeranyl diphosphate = casbene + diphosphate. Catalyzes the cyclization of geranylgeranyl diphosphate to casbene, a diterpene phytoalexin with antibacterial and antifungal activity. This Ricinus communis (Castor bean) protein is Casbene synthase, chloroplastic.